We begin with the raw amino-acid sequence, 287 residues long: Ribosomal RNA small subunit methyltransferase A (287 aa).

The S-adenosyl-L-methionine site is built by N28, L30, G55, E77, D103, and N123.

Belongs to the class I-like SAM-binding methyltransferase superfamily. rRNA adenine N(6)-methyltransferase family. RsmA subfamily.

The protein localises to the cytoplasm. The enzyme catalyses adenosine(1518)/adenosine(1519) in 16S rRNA + 4 S-adenosyl-L-methionine = N(6)-dimethyladenosine(1518)/N(6)-dimethyladenosine(1519) in 16S rRNA + 4 S-adenosyl-L-homocysteine + 4 H(+). Functionally, specifically dimethylates two adjacent adenosines (A1518 and A1519) in the loop of a conserved hairpin near the 3'-end of 16S rRNA in the 30S particle. May play a critical role in biogenesis of 30S subunits. This Rhodopseudomonas palustris (strain HaA2) protein is Ribosomal RNA small subunit methyltransferase A.